A 534-amino-acid polypeptide reads, in one-letter code: H(+)/hexose cotransporter 1 (534 aa).

The Cytoplasmic segment spans residues 1–21 (MAGGGVVVVSGRGLSTGDYRG). The helical transmembrane segment at 22 to 42 (GLTVYVVMVAFMAACGGLLLG) threads the bilayer. At 43–87 (YDNGVTGGVVSLEAFEKKFFPDVWAKKQEVHEDSPYCTYDNAKLQ) the chain is on the extracellular side. The helical transmembrane segment at 88-108 (LFVSSLFLAGLVSCLFASWIT) threads the bilayer. The Cytoplasmic portion of the chain corresponds to 109-114 (RNWGRK). Residues 115–135 (VTMGIGGAFFVAGGLVNAFAQ) traverse the membrane as a helical segment. Residues 136-144 (DMAMLIVGR) are Extracellular-facing. The helical transmembrane segment at 145-165 (VLLGFGVGLGSQVVPQYLSEV) threads the bilayer. Topologically, residues 166–173 (APFSHRGM) are cytoplasmic. Residues 174–194 (LNIGYQLFVTIGILIAGLVNY) form a helical membrane-spanning segment. Residues 195–204 (AVRDWENGWR) lie on the Extracellular side of the membrane. Residues 205–225 (LSLGPAAAPGAILFLGSLVLP) form a helical membrane-spanning segment. The Cytoplasmic segment spans residues 226–299 (ESPNFLVEKG…TSFVIQFFQQ (74 aa)). The chain crosses the membrane as a helical span at residues 300–322 (FTGINAIIFYVPVLFSSLGSANS). Topologically, residues 323-328 (AALLNT) are extracellular. Residues 329-349 (VVVGAVNVGSTLIAVMFSDKF) traverse the membrane as a helical segment. Topologically, residues 350-352 (GRR) are cytoplasmic. Residues 353 to 373 (FLLIEGGIQCCLAMLTTGVVL) traverse the membrane as a helical segment. Over 374-387 (AIEFAKYGTDPLPK) the chain is Extracellular. The chain crosses the membrane as a helical span at residues 388-408 (AVASGILAVICIFISGFAWSW). The Cytoplasmic segment spans residues 409–433 (GPMGWLIPSEIFTLETRPAGTAVAV). A helical transmembrane segment spans residues 434–454 (VGNFLFSFVIGQAFVSMLCAM). Over 455–456 (EY) the chain is Extracellular. A helical membrane pass occupies residues 457-477 (GVFLFFAGWLVIMVLCAIFLL). At 478–534 (PETKGVPIERVQALYARHWFWNRVMGPAAAEVIAEDEKRVAAASAIIKEEELSKAMK) the chain is on the cytoplasmic side.

The protein belongs to the major facilitator superfamily. Sugar transporter (TC 2.A.1.1) family.

Its subcellular location is the membrane. In terms of biological role, active uptake of hexoses. In Parachlorella kessleri (Green alga), this protein is H(+)/hexose cotransporter 1 (HUP1).